The chain runs to 235 residues: Uridylate kinase (235 aa).

Position 9–12 (9–12 (KISG)) interacts with ATP. Residue Gly50 coordinates UMP. ATP is bound by residues Gly51 and Arg55. Residues Asp70 and 131–138 (TGFPYFTT) contribute to the UMP site. ATP is bound by residues Asn159, Tyr165, and Asp168.

It belongs to the UMP kinase family. Homohexamer; trimer of dimers.

It is found in the cytoplasm. The catalysed reaction is UMP + ATP = UDP + ADP. Its pathway is pyrimidine metabolism; CTP biosynthesis via de novo pathway; UDP from UMP (UMPK route): step 1/1. Unlike other bacteria, is not activated by GTP. UTP is a competitive inhibitor against UMP and a non-competitive inhibitor toward ATP. Its function is as follows. Catalyzes the reversible phosphorylation of UMP to UDP, with ATP as the most efficient phosphate donor. Is also able to phosphorylate dUMP. The chain is Uridylate kinase (pyrH) from Ureaplasma parvum serovar 3 (strain ATCC 700970).